We begin with the raw amino-acid sequence, 2527 residues long: Highly reducing polyketide synthase poxF (2527 aa).

The Ketosynthase family 3 (KS3) domain occupies 20-445; it reads VMPIAIIGMA…GANAHVIVES (426 aa). Residues Cys-193, His-328, and His-368 each act as for beta-ketoacyl synthase activity in the active site. Positions 560–882 are malonyl-CoA:ACP transacylase (MAT) domain; the sequence is VFTGQGAQWF…TYASCLSRGQ (323 aa). The tract at residues 951-1086 is N-terminal hotdog fold; sequence HDLLGVPAAG…GLCCTPSPAQ (136 aa). The interval 951 to 1243 is dehydratase (DH) domain; it reads HDLLGVPAAG…SVRVINNAGT (293 aa). The region spanning 951 to 1270 is the PKS/mFAS DH domain; sequence HDLLGVPAAG…CQSLGSSAVV (320 aa). His-983 (proton acceptor; for dehydratase activity) is an active-site residue. Positions 1108 to 1270 are C-terminal hotdog fold; it reads AWRILNPADT…CQSLGSSAVV (163 aa). The active-site Proton donor; for dehydratase activity is the Asp-1174. The methyltransferase (CMet) domain stretch occupies residues 1406 to 1587; it reads EDQAEWSSVS…RLLAKAGFEP (182 aa). An enoyl reductase (ER) (ER) domain region spans residues 1823–2137; sequence GLLNSLVFTE…TGKHMGKIVL (315 aa). The segment at 2162 to 2339 is ketoreductase (KR) domain; it reads TYLLVGGVGG…AVSIDLGMVS (178 aa). Residues 2445–2522 form the Carrier domain; that stretch reads EVTTLIQSAL…GLAGQMAKKS (78 aa). An O-(pantetheine 4'-phosphoryl)serine modification is found at Ser-2482.

It participates in secondary metabolite biosynthesis. Highly reducing polyketide synthase; part of the gene cluster that mediates the biosynthesis of oxaleimides, cytotoxic compounds containing an unusual disubstituted succinimide moiety. The first step of the pathway is provided by the HR-PKS poxF that serves in a new mode of collaborative biosynthesis with the PKS-NRPS poxE, by providing the olefin containing amino acid substrate via the synthesis of an ACP-bound dec-4-enoate. The cytochrome P450 monooxygenase poxM-catalyzed oxidation at the alpha-position creates the enzyme-bound 2-hydroxydec-4-enoyl-ACP thioester, which may be prone to spontaneous hydrolysis to yield 2-hydroxydec-4-enoic acid due to increased electrophilicity of the carbonyl. 2-hydroxydec-4-enoic acid can then be further oxidized by poxM to yield the alpha-ketoacid 2-oxodec-4-enoicacid, which is reductively aminated by the aminotransferase poxL to yield (S,E)-2-aminodec-4-enoic acid. The Hybrid PKS-NRPS synthetase poxE then performs condensation between the octaketide product of its PKS modules and the amino group of (S,E)-2-aminodec-4-enoic acid which is activated and incorporated by the adenylation domain. The resulting aminoacyl product can be cyclized by the Diels-Alderase PoxQ and reductively released by the reductive (R) domain of poxE to yield an aldehyde intermediate. The released aldehyde is then substrate for a Knoevenagel condensation by the hydrolyase poxO followed by an oxidation at the 5-position of the pyrrolidone ring. The presence of the olefin from the amino acid building block allows for migration of the substituted allyl group to occur. This allylic transposition reaction takes place in a conjugate addition, semipinacol-like fashion to yield a succinimide intermediate. Iterative two-electron oxidations of the C7 methyl of the succinimide intermediate to the carboxylic acid can be catalyzed by one of two remaining cytochrome P450 monooxygenasess poxC or poxD to yield oxaleimide A. Subsequent oxidation yields the maleimide scaffold oxaleimide I. Both oxaleimide A and oxaleimide I can undergo oxidative modifications in the decalin ring to yield the series of products oxaleimides B to H. The chain is Highly reducing polyketide synthase poxF from Penicillium oxalicum.